The following is a 546-amino-acid chain: Probable protein kinase UbiB (546 aa).

Positions 124–502 (DFDIQPLASA…HVRQSQSRYL (379 aa)) constitute a Protein kinase domain. Residues 130 to 138 (LASASIAQV) and Lys-153 contribute to the ATP site. Asp-288 (proton acceptor) is an active-site residue. 2 helical membrane passes run 501–521 (YLLGIGATLLLSGSFLLVNRP) and 522–542 (EWGLMPGWLMVGGVVVWLVGW).

Belongs to the ABC1 family. UbiB subfamily.

Its subcellular location is the cell inner membrane. It participates in cofactor biosynthesis; ubiquinone biosynthesis [regulation]. Functionally, is probably a protein kinase regulator of UbiI activity which is involved in aerobic coenzyme Q (ubiquinone) biosynthesis. This is Probable protein kinase UbiB from Salmonella enteritidis PT4 (strain P125109).